The sequence spans 814 residues: Rho GTPase-activating protein 26 (814 aa).

In terms of domain architecture, BAR spans 7 to 262; sequence EFSDCCLDSP…MKENPLEHKT (256 aa). Residues 265-369 enclose the PH domain; that stretch reads PYTMEGYLYV…WMEAMDGREP (105 aa). The 186-residue stretch at 383-568 folds into the Rho-GAP domain; that stretch reads AQLDSIGFSI…ILIENHEKIF (186 aa). Disordered regions lie at residues 584-618 and 638-696; these read SRKKSSDSKPPSCSKRPLTLFHAVPSTEKQEQRNS and SSSL…SSDS. Low complexity-rich tracts occupy residues 591–600 and 638–661; these read SKPPSCSKRP and SSSLQPNLNSSDSNLDVVKPSRPS. Residues 662 to 672 show a composition bias toward pro residues; sequence SLPPNPSPTSP. Position 668 is a phosphoserine (Ser668). Phosphothreonine is present on Thr670. Ser671 is subject to Phosphoserine. A compositionally biased stretch (low complexity) spans 673–696; that stretch reads LSPSWPMFSAPSSPMPTSSTSSDS. In terms of domain architecture, SH3 spans 756–814; the sequence is TPFRKAKALYACQAEHDSELSFTAGTVFDNVHPSQEPGWLEGTLNGKTGLIPENYVEFL.

In terms of assembly, interacts with NYAP1, NYAP2 and MYO16. Interacts with MICAL1 and WDR44. Binds to the C-terminus of PTK2/FAK1. Post-translationally, phosphorylated in a PINK1-dependent fashion promoting retrograde mitochondrial trafficking and clustering.

The protein localises to the cell junction. Its subcellular location is the focal adhesion. The protein resides in the cytoplasm. It localises to the cytoskeleton. It is found in the endosome membrane. In terms of biological role, GTPase-activating protein for RHOA and CDC42. Facilitates mitochondrial quality control by promoting Parkin-mediated recruitment of autophagosomes to damaged mitochondria. Associates with MICAL1 on the endosomal membrane to promote Rab8-Rab10-dependent tubule extension. After dissociation of MICAL1, recruits WDR44 which connects the endoplasmic reticulum (ER) with the endosomal tubule, thereby participating in the export of a subset of neosynthesized proteins. The sequence is that of Rho GTPase-activating protein 26 (Arhgap26) from Mus musculus (Mouse).